A 175-amino-acid polypeptide reads, in one-letter code: Protein-export protein SecB (175 aa).

This sequence belongs to the SecB family. As to quaternary structure, homotetramer, a dimer of dimers. One homotetramer interacts with 1 SecA dimer.

The protein localises to the cytoplasm. One of the proteins required for the normal export of preproteins out of the cell cytoplasm. It is a molecular chaperone that binds to a subset of precursor proteins, maintaining them in a translocation-competent state. It also specifically binds to its receptor SecA. This Anaplasma marginale (strain Florida) protein is Protein-export protein SecB.